A 732-amino-acid chain; its full sequence is Elongation factor 2 (732 aa).

Residues 19–260 (ERIRNMGIAA…MVVRHLPNPL (242 aa)) enclose the tr-type G domain. GTP-binding positions include 28–35 (AHIDHGKT), 94–98 (DTPGH), and 148–151 (NKVD). H597 carries the post-translational modification Diphthamide.

This sequence belongs to the TRAFAC class translation factor GTPase superfamily. Classic translation factor GTPase family. EF-G/EF-2 subfamily.

It localises to the cytoplasm. Functionally, catalyzes the GTP-dependent ribosomal translocation step during translation elongation. During this step, the ribosome changes from the pre-translocational (PRE) to the post-translocational (POST) state as the newly formed A-site-bound peptidyl-tRNA and P-site-bound deacylated tRNA move to the P and E sites, respectively. Catalyzes the coordinated movement of the two tRNA molecules, the mRNA and conformational changes in the ribosome. This is Elongation factor 2 from Thermococcus onnurineus (strain NA1).